Consider the following 125-residue polypeptide: Ribonuclease P protein component (125 aa).

Belongs to the RnpA family. As to quaternary structure, consists of a catalytic RNA component (M1 or rnpB) and a protein subunit.

It carries out the reaction Endonucleolytic cleavage of RNA, removing 5'-extranucleotides from tRNA precursor.. In terms of biological role, RNaseP catalyzes the removal of the 5'-leader sequence from pre-tRNA to produce the mature 5'-terminus. It can also cleave other RNA substrates such as 4.5S RNA. The protein component plays an auxiliary but essential role in vivo by binding to the 5'-leader sequence and broadening the substrate specificity of the ribozyme. The chain is Ribonuclease P protein component from Clostridium botulinum (strain Eklund 17B / Type B).